Reading from the N-terminus, the 322-residue chain is CMP-sialic acid transporter 1 (322 aa).

Over 1 to 2 (MQ) the chain is Cytoplasmic. A helical transmembrane segment spans residues 3–23 (WYLVAALLTVLTSSQGILTTL). The Lumenal segment spans residues 24 to 33 (SQSNGKYKYD). The chain crosses the membrane as a helical span at residues 34 to 54 (YATIPFLAELFKLSFSSFFLW). At 55–75 (KECQSSSPPRMTKEWRSIRLY) the chain is on the cytoplasmic side. The chain crosses the membrane as a helical span at residues 76–96 (LVPSVIYLIHNNVQFATLTYV). The Lumenal segment spans residues 97-100 (DPST). The chain crosses the membrane as a helical span at residues 101 to 120 (YQIMGNLKIVTTGILFRLVL). Residues 121-126 (KRKLSN) lie on the Cytoplasmic side of the membrane. Residues 127–144 (LQWMAVVLLAVGTTTSQV) traverse the membrane as a helical segment. Residues 145-157 (KGCGDAPCDSLFS) lie on the Lumenal side of the membrane. Residues 158 to 178 (APFQGYMLGILSACLSALAGV) traverse the membrane as a helical segment. Over 179 to 198 (YTEYLMKKNNDSLYWQNVQL) the chain is Cytoplasmic. A helical membrane pass occupies residues 199–219 (YTFGVIFNMGWLIYGDFKAGF). Over 220-233 (ERGPWWQRLFNGYS) the chain is Lumenal. The chain crosses the membrane as a helical span at residues 234 to 254 (ITTWMVVFNLGSTGLLVSWLM). At 255–262 (KYSDNIVK) the chain is on the cytoplasmic side. The chain crosses the membrane as a helical span at residues 263–283 (VYSTSMGMLLTMVLSVYLFNV). Topologically, residues 284–286 (RAT) are lumenal.

This sequence belongs to the nucleotide-sugar transporter family. CMP-Sialate:CMP antiporter (TC 2.A.7.12) subfamily.

The protein resides in the golgi apparatus membrane. Functionally, sugar transporter involved in the transport of CMP-sialic acid from the cytoplasm into the Golgi. May transport important nucleotide sugars such as CMP-Kdo (2-keto-3-deoxy-D-manno-octulosonic acid) in physiological conditions. The polypeptide is CMP-sialic acid transporter 1 (Oryza sativa subsp. indica (Rice)).